A 76-amino-acid chain; its full sequence is Adropin (76 aa).

A signal peptide spans 1–33 (MGAALSQGALIAIICNGLVGFLLLLLWVILCWA). Positions 41–76 (IDSLSESSPNSSPGPCPEKAPPPQKPSHEGSYLLQP) are disordered. Residues 52 to 65 (SPGPCPEKAPPPQK) show a composition bias toward pro residues.

The protein resides in the secreted. In terms of biological role, involved in the regulation of glucose homeostasis and lipid metabolism. The polypeptide is Adropin (ENHO) (Bos taurus (Bovine)).